The sequence spans 10287 residues: MKDLYSLYEDISENDKIIISEKLKNLLNYFQDKNKSYVSEFVVVSRTRFFKSISNYGEFLLLQSSSRVISSYEHILRLLHQAKVYLEFVRCLKLNNCSVIDNEKYEEEISKFINYLESKRKKYYYHICQILIKFIVSSLSDNTIDNKFMEKEFDIEEDNIDGYEKNVNDIEIKNEEYNTSYESQRVKDNNNSNYNNNVNIWTINDNDEKIVMEPFDELEEYGNYLYNVLNQMDNKSWKDKNHAEYLKVISLNDAIIKEDNDKNKNSENNNGLTNTSNITNNMILLPKYLENVRNCIYNHQTKSMLEVKSMIEHAMSDNIKAPLFKTGKIVSEMLPSPNYEKYWSTTQPEFSNKIDTSLVQNMIFKFFNLQKNTTPVDNMTPTNYNIKFYDIFKIILKGIYSIKCENEETHIFLNQLLNKTKKKKYPFNYNNQLLDKNVKTDDLYNYLLLPLHLYNNTHEICEGILKYTIYNNDLVLTLKIVDTFLTISVYENSLKDLVHLLNTLAECIILPYLRTEIKENIKHDTGDKDIYRTGTLCKNFETELTNEFNKISDDNNNNNNIGIIDTNKSRDNINQNTNTNNNNNNNNNNDGDRFDDDQFFDNFSNLHKLICKIPLHEYESLKLLELFSLQYPMFLKIQNKPQRCLKDISKPCEYYSNTLPIYGSYIFQIVVSFEIDNSIKVLDELGSKCKICFQLTNDNMNDENSTDITVSDDNSNIPNKEYNFLEINFQQNHMYTKYNKSSVKEEDEIEKSMKAKSSTKSNDETNKANNNKNNNNNNKNNNNNNKNNNNNNKNNNNNNKNSNNNNNNNNDTFEEYEKNNKKKKKNVQVNKLINVYDITNMNTIVFDILIDQGCFSSETNVNNVTNDNGKIVIYSNGRHLLTSNINKKIIGFNEKKGLTNNNIKLKVFTSRTCSFEFPKECYWSSAFVQELVNRKLIPETNQNFLLKNPINIIELYNKVSIALNRYLYRFCEWNNGDYKRIIENDSCYTLYNNIDINTFEALIKYTENNNKILKKLYTLSKNCALDKENYMENNKHNINYYFSLSPVKYHVRKYREYIYEWNQTSDSQICALSILKLYLKNNLDVNDGRIEHNEKFYCLSERLIKSFLKIIKLKTPFINREDFYVNNNYEMEELDLDGSLWLLRRNVFQILLDADKIIMSNIFMRINIETILNLLKFFSDNNSLDSDMILKLLKSLEEKGILEIMMKRMLSTPCKDGTQYNNSNYNDNSHYTHNSLKSQNISSSTYSSSSSSSNLYNTNAENFNDIYTNNNGEEKRKKRKYYEENMHEIQRYEKRKRNNKSRIIDTTHFGVFVEELMTLIEHQTNNAINTPVVNHIEESDVFMENKACDVIHKLCSFYNDEIKSEVFLRNYNHFNLCIKILNEIKKKNNHVSSASEVASIFLRGVVLMLTTYILTIATEYESTKTFLYKPVIPFYNLHNEMLKKKKDIHVYHGEEIKQMISMNSKSMKDRYNNQFNQYGSNNKSSNLTNQNIDILKCDMEDVSSCNSRYSSFINQNWELEYNKKIKKNNSISNNEYNKKGDVESRDHANSWIPLISNQNDGSIDGVIIHSDDSSSQSFLVSKRKVYTFGRKSFESVNMYVDDNEEDEGEEDKSEDYEYCDDEQQNDVYEDTEEESDNYHMRKERRVHQKKKNSKVSINKKTNNSLSDDNNYSSDELEEFYLRKNLLDLCDNNNNNNNNDEPNNFKSQLNEILYKLSKKKKYARNSKKLKLLKKKIIKYKNVSKKLNFIFSLLEEILKIMLSVGLRVLSSISYHYLYEKNGIYKFINIFGSNIIRSNLRDKGSFLELCENMIKPKCLTLLQACTFIISGIIPCLGYVTTLFVDKKANKYFYIKELNNYLSLKMALNIWPMFLKITLQGLLTSRHLSSEMSVHKDNLHPIAECCISITSLATHFLTLFTIMIDNLSRYEIYFNLKKGMNTLGNNYPIPLILINSAKYIRIESKKNKYYDIEKAIRTILLQLTDCSVCDYENYVFNHYMVPQSISSFLYATRMNNDSNLENEHSSNNINAHETDYHDISINKNKALGNEMVKTYQSMYEDDYEQERIGIRSRSRRGIPLKKKSERNNSKEENVNNMDHNNNNNSNSNNNNFFHRGSYSTNPRNNNITCDRKNMEFLKKLMKNDHDAVQCLGKAYSVFHKNFERAQIAFVAVFLHLTGYKHGQIKGPHQNYNSAKNNNDNKNDHIIIEDSLENKKIKIACNLARQGVIDLISKSQASQYHKKSIEEYNTSSKNKKCKEEIQEQMSMEHFEGNNKRMNNVKSGSHNDFKNLVRESHQNINEIDPDDNNKSNVYSSIEQVNDLPLNKKKSPILHLSSDLDEKNDLNFCNFSKEELNYVNDVHPNGEKSSHNNKSNEFLAMDSIQKKREKQIEKILQKCEWIINTYPFGLCPVSVKENISQEWDEHFVFMRRNSYDIPITVRKMYSDRSNYQMLHEVATMPAVAVEPSVSSLSYLDQLFSHQNKINDDKLECIQFSTENIFGKSTTKNLFLLKKLLKTYKRNVCIREPSNQLDTNKYDKICLENNKQFHTYICNNKNVNFSNSCASCDSGEGNYYNDESNYYMNFHFSEKNNDHLSNNSLVLKYNNLCKTNNLEKFGELWLNARSTKNYVYHNDQDVQHIDEFNSNLMNYKPECFLFSLKSVDENDYIMRNENMNNVKWDPTGSHITKYTNSMFDYYDNASDMNLSELHGKFNAFYKPQKIIRSMNKQEFLPALYQEEMLRNQPYHTTANNNTTNIINTTKKKSFPSFDYFRNKYLPNNSIDFTINNAVDHTIDSKDMLQLKEILKFIMNDTDLETVLNIIRIEQLTSLCRYLISRSLKSMLCAGIFGGIKNPIVNMSKKNLSSNKRSQKGYNSNSDDIKKKKKSNCNENEGSLDKYNDKEKKNDKINNGDTKNSDDGKIDMDDKKYYNDDLKNSDYSKNNESNYLSLSKEPDDMLLPSPNYEKGISTCVKKNRFSVLSEAYKEENLLVNQRKYKNLDLNQKIFKNDKRKKGIFEQWRQKSTKSMQWPVILDLLVPSFSRGSYNECNRMISNMESSLFSVQNYGWMLLKLLHIIIIKFRSLTPLKTIMREIDEKNRNSNNNNNNNNTNNSNNSNNNNNINSHYMNQWNGSNIKDPFEYHYWFTQPMEYALSFTLTDITKSICIWYLRYNRKLIMNSSSFSEIIKNSMNTLWIESVLRLIALQICLGVKPLNDSRYVVPFLYHMFTICQPLLREVHISGDYLKKKLLVGNKILYYSNKNNSFLQVKCSYCHKSVCMSSRKMSSKMSPMETPLKSIRKGNSSEVSSKISYLNGHTYSNNDNRDNYDDDNCDNYDNYDNDNENDNCDNSKNDRGVKGYIHSERVQKKQKKIKHKIIKMKMYNLSEQEHEEILDNVITGIIIYHQTLQNNNQHINKMIILQNLKGFKIKEEYYTNENHYWALCVQQYKNSPLYTLPLKNLNKCIKHNNRNIFQTTKMNESDDTSCYYWSVSGDPVYNIYGNAKSISDVQLEICAHKKYDSNVRSYLKKNNFELEFSINTHMNDVVNIWIKRKSIIINKELIEITDHHSIPLFSKGKQKKEMQENEDEKIKNKGKNKTKTNDDKKKNSSINNNNDCYDINYKYDTYNHEENDGSHKEENKKYSNENENVEYLSEHFCDCMKVYTDQDYSNEDYSNDYNYNCDNYKNMYSDDKKNRDLYDHGDNNLNYKKLKLISWNLIQTILWGILVSGENVQMENSDQVISESTTKYIKKKICNIQDEIDVNGNNHNDYKDYKYAFYKLQRKSLIESVLKMIMSVLIKLCNIVKLYNDLTKNKKGSFYICINNTKISMKQVKDCERMITDFMYALIKCVQNSSTAAVTLLRCFLFGQDNPTYRFRKLNKIQINCKFYRLITECIKKAPSDADDISIFFNTYLDKKKTLMNNDNDKINTKTTKKTKKEKTTKCYKNEMYDEKATMENNKKNNMGDLKWNEGEAPAHPSKDKSKHYNDNNNNNNDDNNSNNNNDYNNKDHINYPDDYVYNNRCIKYKGMDLKMSNFFFKYYDTNMKKNYNESKIHGFFLLRCLPPIKMFPKQLVIQETQKLFQNENNFLFNSKKDGSSNNDKNDNSNKNRNNYNNNDDNNNNDDNNNNNDDNDDNDNINNNYNNNNNNNNRNNSNSNNSNNSDNNNINYYYNNTDYQIGEHNNMQIHSSSKENTLYPDDHQNVDISTTTNEGNSQCNSINNILGLIPRISYRNHPFDDLPQSEFFMSSRPSDDFEAHMEGRVLRVLRGLNLGGVVLCLAPLTFPALHVGPNEVNDIINFRIQTRGRFGVTVAPAECVLSNVSEVFDRNDVVGFRTNMCPPFRHDVFAANVQYELGDLLSVKFNVEDQQNQKCLRTELMVSGVSIGSVLEVLFEADSQIEFERRMNLIFIFQDPLTIVYEGPTFTMQYVDPNKNNANNFRNDKKNADEEFLNELYSLSGYDKKNFKKELRKIRMKKNEFYESVKLYQSILESDNEILKDLKHEVIIRMNTSLTNIVSYFKHLSSNGVIFNSENDYYYWNDTDDTLLRKITTKKKKKHLYNMNCNNKMNEKYELISLDTLLSNDEKKKKMNNMNILNNPNFKTKGGKKKKKINIHLSNDKEEDKDEEAKYVEGIKQEKHTYYDYSNNSLLYNENKDNSVDNYYSFGNKEDGNRDIFSYSEEKHYNIITYDNSQITSSDKNNDPNREKILEKKNFQDDSIMSNRQSDNKEEGTSFNLYADSSIYVNMNKKYKSHVDIHKTIREVLSIICVLGLNINGEPKENKQEKFSNDTNYIFDELPWLTSLSDLKNSVTYNLDRKCLELFFCNLVDIICMDVFLGSILNFVTHNINENNQRCTRDKHNIVSFKHNKNYKKVIQKTSELDSECYPNEEYNDEFFENRKGSPYFPSRSKNGNINSDRRKNYNIQNSDNSNIGDSELNVNVNDNDNSSCGSNSKDSLNVHARNVGTDINSSSESGNTNSNNENSLRNSIFMEENETIESYRNKTKRSLSKDKNAGDLSNDNTEEIYHNNRYKKEKNKDEKNKIKKNKSYKNKTHKNKKQKNKSSNADKMNKNSLYGYTLCLIGTKSIMCCCIILRTLLEMNSDGYYEPNEKMYASCKRLLNFIKLFFFIDIGISDVLIKYFAEKNKMMDMNFLFDKRKQTQNGNNNSEICSTSSFLNSFVKNTNGNNKKKNNNHNDNHMDCMNWKEEVVFYNQKYHDNMHTKDLLNNKEDNQSSYISTNGKNKDTKDAVQNEYINILEIVNYCGIPNNFLEYFDISTPTIKNQQVIAQNDSFDLWIYIMNLLICFNSQNKYSLSFPQSINQLSENSIKNTLFDLEYSKFYFSNKILRKSVKFYASWLLKKYIIDMTCVMASLVPKLFIDELKTNLMKINEGVRSGEEIENMRNVQNKYTNSQDSVNYSSANTKEMNHKTIVPKCCFENEKTKLDHVVNNKEGHQMGFDSFNDKKDGLHNIHHAKSCEEKNNTKSNSYNNYNNYDNYNNINKYSCYNDKEEYQHELLCINNDYTHHNKTQGNFNDKLMHAKKKYNSKYRKVNKVEHIGQLLNAHLRNKEEILNIFSIMYLFRICIYYLGRSKDFRKEDYWQNFQGQLRNAKIKENVYKLLNEKSCKSSLLFGWQRIFYQCVVSWDDEKLVDQLLIIIQSELLYHLIGSVAQSMSQKRVKVEQFYAISPSVHVAHWMIDTFVRHPLCPSKIRSCCITPMTVTSLFGLIMNGNRLPIFLGIDVCRLVYWCCVVYILQNNQMHKHYKKLNNIDILTQLNITMEEPLNNDLEYTTCANQKKMITKNYHNTKSNKQHNNYFSTRGKMQKVKCNYYSFLSYVFHCVNICGSSVINQIISFNNNDVGYKNNVNKNKGNDNVSNNNNNNNNNININSSSNNNNNNSSSNNNNNNSSNNNNNSSNNNNNSSSSNNNNVRNSNNEHVNNIIDNLNNNINDILNCIQNSSNNRVLNNHFSGISSVSNETIYNLNITNRRNSHNISSNNINNTNTLQENTETNNTSNVNNLGGINSLYVNGTNGNLKTDKILLHNFSNFDLMENKEPSMYNSMKMNASLLVHYFACAAYYIKRADVYNIMNYYNEHTHANFKQYCLYLYVVDHVSKIYSKHIKRKINLKKKGGKKDDQLMTSSFFSDLMKKDPNEKSHMCYDDYTNNKYDNNNNKNNLVNNENELIVRKDSKISSKNYSFNSDYKHADKTKCRKHTYDESYKGQYPELFVDDVLHIPKKLSANIIINMNEKIHHISSSNSNTIKIKIRDMFVLPKQNDKSFIHKGIFSTHHNKPFYDKEDKYMFGEKNIVEHKNKQKQLYADHSNHQNKKHFTYNENKDKFNDKSNCNLKQKINRLNSEENERIEKINQKNFKHPNIIFSADNSFNYILHEIKFKKIQEFVYLNSNVIDEKVDLDTIEKITLGSYIELTDIYNLPGSFFLIGNSELYSGSSNLCSSSFTISLILVDNNADNMSDGNFNNFPNIEIGVINRKKYFEIKLEEDQNEDEDKIEIEIEEEKENENEKEVEKDENVHDEKDKVEQIEHEKKKEKDDKEAWLLHYDDGKDTNVKVKKFSNCRISKNEEDNIAYRLRNKELLGEKNITSKNSKFLYDKNVVDESLKCTRKNEDEYEGTEKRHSSNIPTDINKIAHVSLTKYINNEKIEKSKTRGGKRVQNVVEKLRNTLNDNNIKEDILNENHNKNNININSNINSNNNMMRGKMFHENLCDINMKNLGSNFYHSKYADLNKTNYITLNISDGNVNSKGFDCTDNNIENMKELLTNKMSGILNITVQIVGKKILWFANNILIFCKDFSYEMKEFLPFLKVSPIESKKIPKNNGSNKPSVHMKFTEMNEKTFVSPLSNFYFKFENMHKLKYENDCINTNKLWSKCLWKPVFFILPDVNNNSDNNVDVPGTSTHDLVSTKMNTHVNVNNNNMANNTNDTNYLNHSIIKKKMVPSIIPQSSNEIVIKYNKYHNTYGHIEYEDQFANTLFVSPNIQIKSEPINITYYMYCKNLQGKKCKLLCMENIKNIRTISIKNYYGFINLCNQYKHNEKPTSSSMEQKNSNNNVSYSHHNMYQVQQKPYSKIFDTRKNVESENSNNKADSILKQHLNRIINKSEDLRINNKGTLDICNKLLLSNECKTNEKKKKTGSNNIGSNTNIHELSDNNRGQHTSYYHEQLLSESLSKNVIHSNYINDYFTLNNDNKNNTSSSSNNNNNNKNNNNNNDNNNDNDNICSNSNNNVHIKYKLNQIPKIRKHIHHNIKYSSIQEINDNSHYSNKNIIEEKKQKENSNDMHNPKKNEGHYYIADPSNEKEILYDNKNNENGYSNNFLDDNNALHKHVHNKITLKGSNTYYDMDKIKDKQIEYFSNDSSNYSLYYIGCKEFKLCIDSYDSIFPAKPFIFNCTVNFKEEENYYHKKNYLTNSVGIIWGIYRWLWKSNGKFICPLRLPLCVSEFPSEKIEECEIDVVGYKSNDNLCIEFQPLYQCLLFYKNGTYQFGFKFDTFYNYRNLKNTFLSEHNGDMNMDRVHQNISKLSYSSSISNANFNDNFFVKRFVHNKYEQVSTEKNDLQKMSKKKDDKINNYDDNMMNNYDDGNNNNNNNDSMNNHKDDMNNYNDNINNYVESMNNYDDIMNKGHVVTQNNLTLNSEHNTKVNISNFFPLSNMSSVSNMYTISNERKSSNKGNGTNNVVKARVERRGKYKGMNGININNDNDRDEDNNKDKDDGNHDNVNNINSFYNKDRMISYDNLKQEKQNDTVMRIKNHVNMIKLYNCLLLNDCENVSSILINNPELLTKSNENMSEISFEHYYQMNSDDFPYELISSMKNIMHEKYLTPLMLACRIGCEECVQNIIEKGKVNPNKSCHRIEKETPLMVAAQYGHSRIVCMLICVYGVQVNKKDIKGNTALHKILLNYSNTEGKKNSTIKIVQLLLKLGADLTIKNKKGISVEDLVQKKLIKNEKIENLLNIWITLIIKNKKKHEGRYIPRNIIPGLLSNCSIVVGFPKGINGNVPNECGVKINSFVVGGEELVNVRYHKEKPTKHTFDNNYDNNYDNNYDNNYDQDGGNNIYNNAHSNVYNNGDYKNNLNKDDHPCYINFNYDKLNYNYNKWRVRTKEEEYYSCDNSSSNSSISKFGNLEKKIIEDHEKYKFSKYGGYPNGLCYKGEKNTHYNKGFEGMNSLEFDAFSGCKNMYEDTYDKENEEKLLYNNIKDNGLKEIDQEINHSNDNIKAFLKDDDEKDDDEYQKPYDKKVINKNKNDNYDKNDNYDKKDNYDTNDKNDKNNCDDNIILSGGKKDKRNKKVMNTNSSGRRTISKNSPNLSSAKNIKCSKTSTYNSEKYNSNERNSNLENHAIPIDHKDSVDETFVFIEKQKRNNKINTNDSMTYNPVTHEKENILNYILVHTYIDGKLGIRSASNHDMETEHGMDNIFETENKKNKALNSNMSNNNNNNNNSNNNNNNNSNNNNNNYNNNYNNNNNNCIYQEFYMLRKDKKKRKHLILSNLQNNLFNYHDLKYSLIEFINKSGVFSDIIKGHSYLDSKKKIPKFDELKNSLIEANNELDIIKGFKKFLELFDFLYMDDRLKYFLNIDLRKNLENSRNIVDLGYILLKIDSFCCIFNSFKLQWKDNSHEEWKKKLLKGIGILNEFSDIKWITDSYTIFKYEEEILESASFIDKILQNGNYMVFYNNLMNMIHDKNIHLKNGLYDSHIFNDMLKNINIEHFNRDTILYDICSKQNILKNYFIQERNKKYAMNNHDSRVINEKYKNYMNEYFVNKKLKGHSNNKDLYLSMNDSEDELIYSKEKKYKKHQTCDKYIYKSEMKEEMYNKSNELYNNSLNNSNNINNHSEFYNNGVNRKGDHTYANEKDLSMTSLDCKNHMYGEPQPKDKTYKKGMYDEERKQSMFNTSENTEQHDLINKVSGKEEDVRKPKQRNIRSKRLEDIIDKMYEDNDISNRENSKKNIDGLNNISGNGRIKFPSYSKNLLRYRNGNFLLNYSNNIFEKGREDESLNSHSPRVTSNLLASYSNERHGIKLAFMNSGEQGKVMKHTYNDNVSNNVSNNNNIQGEYNHKGDVPHNKFIEKNHYTKNGTNILSSLNKHNHLNTQEENNSLENNYSCETFCDEYDSEESEFELICEVHFTSKPNEEIMTREQFNKMWPQTLDMYILHIYDLISSYMDSPEKISLFIYHAFDMEKIKKKLPSKSSQLWKRINMSLDDFIEEIKNVHNYTMRIIYQSNYKRYGMLPPNFKKYFTLSEECLKNIAKNKIIMNMDYYKNYIYEENKKMFLKIIQDRIYLLNKFNIYFENCLPITSILFNKPVINLEEQGLRTLECPLCFFMSNDSYFPWTYKKRNTHLFQYNNNNNLCLVQKMRSELYDNNNLMSKNVSMLSLYNNTNYSNNDNNSIVGQSNYPIKVEGNHINENYKNCAEHNHYDYSLNKNYSNEKSIYVKNSKQIDDIKKIKSGNEYIIMDSIQSLDKNSTIVKKGSFFLNNGKGSYNSYTEIEDKDWLLGNVENLNNHNIYPDNEINYKNNNHEDNNYNCYQNHLCGNESEEENEIFDCEKYCKNMYTSNKMVLAMGSSDLPIQLSSYLFIKKLLKHDTCLKLWKECLKYITSSSSEKSNLTLRIDRGMAATAKHIAHTMWYQSTYSLLNIDTDKLRGKPRDRPFMVVFVGEGATDFGGPFHEYLSSISREVMGKLSDSPDKSLPVFPLCIPCPNYTQAIGARQDTVIINPQSTPYVVKEWDYIGEVDVIDNLESFRWQILNIYNSIKDIKKKLQKTAKDSYEDYKQKMEENGSDDGLENIMPVKGKSKTKGKYKKKNKSNKMNMGSDNILKDGVHKDNNNQKGHKYDEKNICNDKNIQEMTSKEKMYFYTSKKSVTFEKLEENEKMDYQIENKYDYPFVCDACEYDSDIYEIINNASLKSRKLFMNKIWKKKKCLDDEGDKNVLLRDPHENENMRDDIRNNMNNNNNNNNNNNNNNNNNNNNNNNNNNNNNNNNNNNNLNSIGGSKNTMTDGKKKNKFIIDYDEKTIKAMELAMYESLGRVMGMCVCIASALNICFNPIIWKKICGVPLELQDLADYDFVAVEMLKTLKMLNSEKSNEWNMELKQSLGDMTFITEDSGGNSIELIKNGMNIPINFDNLGLFIRLMTKCKMNESSKGIRHLLKGFSSVIPLGRLRLLYDFKDVEHMVCGEREINIEVLKAHTWSNDLNIKDKLFTVLEEFTNEQLQSFLRFVSGRSRLPTTKNDWYMIIDVENPNKNISQIDQRLPTAVTCGFRLLLPQYSSLDILKERLLYAIKNCTAIDLDAYVVHDQMQLMYGE.

The TPR 1 repeat unit spans residues 47–82; the sequence is TRFFKSISNYGEFLLLQSSSRVISSYEHILRLLHQA. The span at 566–589 shows a compositional bias: low complexity; the sequence is TNKSRDNINQNTNTNNNNNNNNNN. Positions 566–592 are disordered; that stretch reads TNKSRDNINQNTNTNNNNNNNNNNDGD. The stretch at 631-665 is one TPR 2 repeat; the sequence is YPMFLKIQNKPQRCLKDISKPCEYYSNTLPIYGSY. Disordered stretches follow at residues 740–823, 1221–1251, and 1599–1670; these read KSSV…NKKK, NNSN…SSSS, and YVDD…DDNN. Composition is skewed to low complexity over residues 767-810, 1221-1235, and 1242-1251; these read KANN…NNNN, NNSN…THNS, and SSSTYSSSSS. The span at 1601–1635 shows a compositional bias: acidic residues; that stretch reads DDNEEDEGEEDKSEDYEYCDDEQQNDVYEDTEEES. Residues 1641–1653 show a composition bias toward basic residues; the sequence is RKERRVHQKKKNS. Over residues 1654–1670 the composition is skewed to low complexity; that stretch reads KVSINKKTNNSLSDDNN. The next 3 membrane-spanning stretches (helical) occupy residues 1821–1841, 1860–1880, and 1900–1920; these read ACTF…TLFV, LKMA…GLLT, and ECCI…TIMI. Positions 2070-2080 are enriched in basic residues; the sequence is SRRGIPLKKKS. The interval 2070-2112 is disordered; that stretch reads SRRGIPLKKKSERNNSKEENVNNMDHNNNNNSNSNNNNFFHRG. The segment covering 2090-2107 has biased composition (low complexity); sequence VNNMDHNNNNNSNSNNNN. The ANK 1 repeat unit spans residues 2116-2145; that stretch reads TNPRNNNITCDRKNMEFLKKLMKNDHDAVQ. One copy of the TPR 3 repeat lies at 2141–2175; sequence HDAVQCLGKAYSVFHKNFERAQIAFVAVFLHLTGY. Positions 2854 to 2865 are enriched in polar residues; the sequence is NLSSNKRSQKGY. Disordered regions lie at residues 2854–2945, 3087–3113, 3303–3344, 3561–3599, 3942–3998, 4076–4157, 4695–4716, 4886–4972, and 4984–5051; these read NLSS…SKEP, KNRN…NNIN, NGHT…NDRG, FSKG…SSIN, TMEN…KDHI, LFNS…INYY, EKKN…KEEG, SPYF…LRNS, and YRNK…SNAD. Basic and acidic residues predominate over residues 2886-2929; that stretch reads SLDKYNDKEKKNDKINNGDTKNSDDGKIDMDDKKYYNDDLKNSD. The span at 3090-3113 shows a compositional bias: low complexity; sequence NSNNNNNNNNTNNSNNSNNNNNIN. The segment covering 3316 to 3335 has biased composition (acidic residues); that stretch reads YDDDNCDNYDNYDNDNENDN. Composition is skewed to basic and acidic residues over residues 3567 to 3579 and 3965 to 3974; these read KKEM…EKIK and PSKDKSKHYN. A compositionally biased stretch (low complexity) spans 3975–3992; the sequence is DNNNNNNDDNNSNNNNDY. A compositionally biased stretch (basic and acidic residues) spans 4079 to 4094; the sequence is SKKDGSSNNDKNDNSN. Low complexity-rich tracts occupy residues 4095-4116 and 4124-4157; these read KNRN…NNNN and NINN…INYY. Over residues 4906–4917 the composition is skewed to polar residues; it reads YNIQNSDNSNIG. Low complexity-rich tracts occupy residues 4918-4942 and 4953-4972; these read DSEL…DSLN and NSSS…LRNS. Over residues 5026–5045 the composition is skewed to basic residues; it reads KIKKNKSYKNKTHKNKKQKN. The next 5 membrane-spanning stretches (helical) occupy residues 5058–5078, 5106–5126, 5552–5572, 5716–5736, and 5815–5835; these read LYGY…CIIL, FIKL…KYFA, EEIL…YYLG, LPIF…VVYI, and FLSY…NQII. Positions 5848–5917 are disordered; the sequence is VNKNKGNDNV…NNNNVRNSNN (70 aa). Residues 6004–6032 form an ANK 2 repeat; that stretch reads GINSLYVNGTNGNLKTDKILLHNFSNFDL. Residues 6051 to 6084 form a TPR 4 repeat; the sequence is LVHYFACAAYYIKRADVYNIMNYYNEHTHANFKQ. Disordered regions lie at residues 6495 to 6527, 7123 to 7147, and 7183 to 7217; these read EEEK…HEKK, EKKK…DNNR, and NKNN…CSNS. Over residues 6501–6527 the composition is skewed to basic and acidic residues; sequence ENEKEVEKDENVHDEKDKVEQIEHEKK. Residues 7129–7147 show a composition bias toward polar residues; that stretch reads GSNNIGSNTNIHELSDNNR. TPR repeat units follow at residues 7347 to 7380 and 7577 to 7610; these read SNDS…KPFI and NNNN…YDDI. The segment covering 7571–7583 has biased composition (low complexity); sequence DDGNNNNNNNDSM. Disordered stretches follow at residues 7571 to 7590 and 7653 to 7712; these read DDGN…KDDM and SNER…VNNI. Residues 7696-7706 are compositionally biased toward basic and acidic residues; that stretch reads DNNKDKDDGNH. ANK repeat units lie at residues 7809–7839, 7845–7875, and 7880–7917; these read KYLT…NPNK, EKET…QVNK, and GNTA…DLTI. Disordered stretches follow at residues 8208–8300 and 8413–8448; these read LKDD…SAKN and ALNS…NNYN. The span at 8219-8259 shows a compositional bias: basic and acidic residues; that stretch reads YQKPYDKKVINKNKNDNYDKNDNYDKKDNYDTNDKNDKNNC. The span at 8277-8300 shows a compositional bias: polar residues; it reads VMNTNSSGRRTISKNSPNLSSAKN. Over residues 8415-8448 the composition is skewed to low complexity; that stretch reads NSNMSNNNNNNNNSNNNNNNNSNNNNNNYNNNYN. 2 TPR repeats span residues 8782–8815 and 9550–9584; these read QTCD…SNNI and DLPI…ITSS. Disordered regions lie at residues 9795–9818 and 9913–9979; these read MGSD…HKYD and NVLL…SKNT. Composition is skewed to basic and acidic residues over residues 9800–9818 and 9913–9930; these read ILKD…HKYD and NVLL…DDIR. Residues 9931 to 9971 show a composition bias toward low complexity; the sequence is NNMNNNNNNNNNNNNNNNNNNNNNNNNNNNNNNNNNNNNLN. Positions 9938-10273 constitute an HECT domain; it reads NNNNNNNNNN…IKNCTAIDLD (336 aa). The Glycyl thioester intermediate role is filled by cysteine 10241.

The protein resides in the membrane. It carries out the reaction S-ubiquitinyl-[E2 ubiquitin-conjugating enzyme]-L-cysteine + [acceptor protein]-L-lysine = [E2 ubiquitin-conjugating enzyme]-L-cysteine + N(6)-ubiquitinyl-[acceptor protein]-L-lysine.. It participates in protein modification; protein ubiquitination. Putative E3 ubiquitin-protein ligase. In Plasmodium falciparum (isolate 3D7), this protein is Putative E3 ubiquitin-protein ligase protein PFF1365c.